Reading from the N-terminus, the 662-residue chain is Methionine--tRNA ligase (662 aa).

Positions 14–24 (YYPSGKLHLGS) match the 'HIGH' region motif. The short motif at 308–312 (KMSKS) is the 'KMSKS' region element. An ATP-binding site is contributed by lysine 311. Residues 559 to 662 (DFEKIELKVA…DDVPAGSLIG (104 aa)) enclose the tRNA-binding domain.

Belongs to the class-I aminoacyl-tRNA synthetase family. MetG type 2B subfamily. As to quaternary structure, homodimer.

The protein resides in the cytoplasm. The catalysed reaction is tRNA(Met) + L-methionine + ATP = L-methionyl-tRNA(Met) + AMP + diphosphate. Functionally, is required not only for elongation of protein synthesis but also for the initiation of all mRNA translation through initiator tRNA(fMet) aminoacylation. The sequence is that of Methionine--tRNA ligase (metG) from Lactococcus lactis subsp. lactis (strain IL1403) (Streptococcus lactis).